The primary structure comprises 1009 residues: MDVDSRMTTESDSDSDAAAQGGGGGGFGSETSSASPSAPGTPTAMGAGGGAAPIAAAAIAAAASAAVVAGPRPAPGYTVVNAAMEKKEDGPGCRCGHTLTAVPAVGEEGAPGYVGPRLILFGGATALEGNSATPPSSAGSAGIRLAGATADVHCYDVSSNKWSRLTPVGEPPSPRAAHVATAVGTMVVIQGGIGPAGLSAEDLHVLDLTQQRPRWHRVVVQGPGPGPRYGHVMALVGQRFLLTIGGNDGKRPLADVWALDTAAKPYEWRKLEPEGEGPPPCMYATASARSDGLLLLCGGRDANSVPLASAYGLAKHRDGRWEWAIAPGVSPSPRYQHAAVFVNARLHVSGGALGGGRMVEDSSSVAVLDTAAGVWCDTKSVVTTPRTGRYSADAAGGDASVELTRRCRHAAAAVGDMIYVYGGLRGGVLLDDLLVAEDLAAAETTNAANQAAAIAAASDIQAGREPGRYAYNDEQTGQPATITSPDGAVVLGTPVAAPVNGDMYTDISPENAVIQGQRRMSKGVDYLVEASAAEAEAISATLAAVKARQVNGEAEHSPDREQSPDATPSVKQNASLIKPDYALSNNSTPPPGVRLHHRAVVVAAETGGALGGMVRQLSIDQFENEGRRVIYGTPESATAARKLLDRQMSINSVPKKVIASLLKPRGWKPPVRRQFFLDCNEIADLCDSAERIFSSEPSVLQLKAPIKIFGDLHGQFGDLMRLFDEYGAPSTAGDIAYIDYLFLGDYVDRGQHSLETITLLLALKVEYPLNVHLIRGNHEAADINALFGFRIECIERMGERDGIWTWHRMNRLFNWLPLAALIEKKIICMHGGIGRSINHVEQIENLQRPITMEAGSVVLMDLLWSDPTENDSVEGLRPNARGPGLVTFGPDRVMEFCNNNDLQLIVRAHECVMDGFERFAQGHLITLFSATNYCGTANNAGAILVLGRDLVVVPKLIHPLPPAITSPETSPEHHLEDTWMQELNANRPPTPTRGRPQAANNDRGSLAWI.

Positions 1–48 are disordered; sequence MDVDSRMTTESDSDSDAAAQGGGGGGFGSETSSASPSAPGTPTAMGAG. Positions 29-45 are enriched in low complexity; that stretch reads SETSSASPSAPGTPTAM. 5 Kelch repeats span residues 136–182, 240–288, 293–344, 349–396, and 417–463; these read SSAG…VATA, FLLT…TASA, LLLL…FVNA, SGGA…DAAG, and MIYV…IQAG. Residues 549 to 572 form a disordered region; it reads QVNGEAEHSPDREQSPDATPSVKQ. The span at 553–563 shows a compositional bias: basic and acidic residues; it reads EAEHSPDREQS. Residues Asp-711, His-713, Asp-745, and Asn-777 each coordinate Mn(2+). The active-site Proton donor is the His-778. Mn(2+)-binding residues include His-830 and His-909. The segment at 984 to 1009 is disordered; that stretch reads NANRPPTPTRGRPQAANNDRGSLAWI.

The protein belongs to the PPP phosphatase family. BSU subfamily. The cofactor is Mn(2+).

It is found in the nucleus. The catalysed reaction is O-phospho-L-seryl-[protein] + H2O = L-seryl-[protein] + phosphate. It carries out the reaction O-phospho-L-threonyl-[protein] + H2O = L-threonyl-[protein] + phosphate. The protein is Serine/threonine-protein phosphatase BSL2 homolog (BSL2) of Oryza sativa subsp. japonica (Rice).